A 468-amino-acid chain; its full sequence is Protein translocase subunit SecY (468 aa).

Over 1–20 (MGARDVIYAMEKWFPEVERP) the chain is Cytoplasmic. Residues 21–47 (KKHVPLKEKFVWTGLALVLYYVLAEIP) traverse the membrane as a helical segment. Residues 48–58 (VYGIPKKIQDY) lie on the Extracellular side of the membrane. The helical intramembrane region spans 59–66 (FQFLRVVL). Residues 59 to 87 (FQFLRVVLAGRNGSILTLGIGPIVTAGII) form a discontinuously helical membrane-spanning segment. The stretch at 67–78 (AGRNGSILTLGI) is an intramembrane region. Positions 79–87 (GPIVTAGII) form an intramembrane region, helical. The Cytoplasmic segment spans residues 88–108 (LQLLVGSELIRLDLANPEDRR). Residues 109–133 (FYQALQRVFSVFMCFFEAAIWVLGG) form a helical membrane-spanning segment. The Extracellular portion of the chain corresponds to 134 to 144 (AFGRVGVDVTY). The helical transmembrane segment at 145–169 (TIATLMIIQLALGGIILIVLDELVS) threads the bilayer. Residues 170-175 (KWGIGS) lie on the Cytoplasmic side of the membrane. A helical transmembrane segment spans residues 176–194 (GISLFIAAGVSQRILTRSL). The Extracellular segment spans residues 195 to 239 (NPLTDPNIIDPLTGKPAIVGAIPYFIQHILDGDLKGALYRGGSAP). Residues 240-261 (DMIAVTATIIVFLVVVYFESMR) traverse the membrane as a helical segment. Over 262–285 (VEIPLGYRGVTIRGRYPIKFLYVS) the chain is Cytoplasmic. Residues 286–307 (NIPIILTFALYANIQLWARVLD) form a helical membrane-spanning segment. The Extracellular segment spans residues 308 to 346 (RFGHPWLGRFDPVTGNPIGGFVLYVIPPRNIFTVIDNPV). The chain crosses the membrane as a helical span at residues 347–366 (RAIIYLILTIIFSLLFGFLW). The Cytoplasmic segment spans residues 367-409 (VELTGLDARTIARQLQRAGLQIPGFRRDPRTLERVLQKYIPYV). A helical transmembrane segment spans residues 410–428 (TFWGSLTVALISVLADFLG). The Extracellular segment spans residues 429–431 (ALG). The chain crosses the membrane as a helical span at residues 432–446 (TGTGILLTVGILYRF). Over 447–468 (YEEIAREQITEMFPALRRLFKG) the chain is Cytoplasmic.

This sequence belongs to the SecY/SEC61-alpha family. In terms of assembly, component of the Sec protein translocase complex. Heterotrimer consisting of alpha (SecY), beta (SecG) and gamma (SecE) subunits. The heterotrimers can form oligomers, although 1 heterotrimer is thought to be able to translocate proteins. Interacts with the ribosome. May interact with SecDF, and other proteins may be involved.

The protein localises to the cell membrane. In terms of biological role, the central subunit of the protein translocation channel SecYEG. Consists of two halves formed by TMs 1-5 and 6-10. These two domains form a lateral gate at the front which open onto the bilayer between TMs 2 and 7, and are clamped together by SecE at the back. The channel is closed by both a pore ring composed of hydrophobic SecY resides and a short helix (helix 2A) on the extracellular side of the membrane which forms a plug. The plug probably moves laterally to allow the channel to open. The ring and the pore may move independently. This Pyrococcus horikoshii (strain ATCC 700860 / DSM 12428 / JCM 9974 / NBRC 100139 / OT-3) protein is Protein translocase subunit SecY.